The primary structure comprises 617 residues: Protein DWARF AND LOW-TILLERING (617 aa).

2 disordered regions span residues K29 to D92 and P159 to A206. Residues K171–S187 are compositionally biased toward low complexity. One can recognise a GRAS domain in the interval G208–T594. Residues L215–D295 form a leucine repeat I (LRI) region. A VHIID region spans residues L301 to G366. A VHIID motif is present at residues V332–D336. The interval E376–M408 is leucine repeat II (LRII). The PFYRE stretch occupies residues V417–N508. The SAW stretch occupies residues A511–T594. Positions A596–S617 are disordered. Over residues S603–S617 the composition is skewed to low complexity.

It belongs to the GRAS family. Interacts with GSK2. Interacts with SMOS1 (via C-terminus). Phosphorylated on serine and threonine residues by GSK2. Dephosphorylated during response to brassinosteroid. In terms of tissue distribution, expressed in the shoot apical meristem (SAM) and elongating cells of young seedlings. Expressed in leaf joints, culms, internodes, stems, young panicles, primary roots and lateral roots.

Its subcellular location is the nucleus. Its function is as follows. Probable transcription factor that acts as a positive regulator of brassinosteroid (BR) signaling. Functions downstream of BRI1 and GSK2 to modulate BR responses. Acts as a direct target of GSK2 kinase to mediate BR responses. Involved in feedback inhibition of BR biosynthetic genes. Repressed by BZR1. Cooperatively functions in a transactivating complex with SMOS1 to enhance the transcription of the SMOS1 target PHI-1, and regulate plant organ size. Interaction between SMOS1 and DLT is a crosstalk point for auxin and brassinosteroid signaling. The chain is Protein DWARF AND LOW-TILLERING from Oryza sativa subsp. japonica (Rice).